The sequence spans 457 residues: Tubulin beta chain (457 aa).

8 residues coordinate GTP: Q11, E69, S138, G142, T143, G144, N204, and N226. E69 is a binding site for Mg(2+). Residues 431-457 (EGEEEEDAYAEGAVVNGDQSYEDQYAA) are disordered.

This sequence belongs to the tubulin family. Dimer of alpha and beta chains. A typical microtubule is a hollow water-filled tube with an outer diameter of 25 nm and an inner diameter of 15 nM. Alpha-beta heterodimers associate head-to-tail to form protofilaments running lengthwise along the microtubule wall with the beta-tubulin subunit facing the microtubule plus end conferring a structural polarity. Microtubules usually have 13 protofilaments but different protofilament numbers can be found in some organisms and specialized cells. It depends on Mg(2+) as a cofactor.

Its subcellular location is the cytoplasm. The protein localises to the cytoskeleton. In terms of biological role, tubulin is the major constituent of microtubules, a cylinder consisting of laterally associated linear protofilaments composed of alpha- and beta-tubulin heterodimers. Microtubules grow by the addition of GTP-tubulin dimers to the microtubule end, where a stabilizing cap forms. Below the cap, tubulin dimers are in GDP-bound state, owing to GTPase activity of alpha-tubulin. The polypeptide is Tubulin beta chain (TUBB1) (Porphyra purpurea (Red seaweed)).